The sequence spans 680 residues: DNA ligase (680 aa).

NAD(+) is bound by residues 44 to 48, 94 to 95, and E124; these read DYIYD and SL. The N6-AMP-lysine intermediate role is filled by K126. The NAD(+) site is built by R147, E181, K297, and K321. The Zn(2+) site is built by C415, C418, C433, and C438. The region spanning 598-680 is the BRCT domain; the sequence is DENSFFYGKK…VDEQVKEDGK (83 aa).

Belongs to the NAD-dependent DNA ligase family. LigA subfamily. It depends on Mg(2+) as a cofactor. Mn(2+) is required as a cofactor.

It catalyses the reaction NAD(+) + (deoxyribonucleotide)n-3'-hydroxyl + 5'-phospho-(deoxyribonucleotide)m = (deoxyribonucleotide)n+m + AMP + beta-nicotinamide D-nucleotide.. In terms of biological role, DNA ligase that catalyzes the formation of phosphodiester linkages between 5'-phosphoryl and 3'-hydroxyl groups in double-stranded DNA using NAD as a coenzyme and as the energy source for the reaction. It is essential for DNA replication and repair of damaged DNA. This Leuconostoc mesenteroides subsp. mesenteroides (strain ATCC 8293 / DSM 20343 / BCRC 11652 / CCM 1803 / JCM 6124 / NCDO 523 / NBRC 100496 / NCIMB 8023 / NCTC 12954 / NRRL B-1118 / 37Y) protein is DNA ligase.